The following is a 312-amino-acid chain: MASGNCTTPTTFILSGLTDNPGLQMPLFMVFLAIYTITLLTNLGLIALISVDLHLQTPMYIFLQNLSFTDAAYSTVITPKMLATFLEERKTISYIGCILQYFSFVLLTVTESLLLAVMAYDRYVAICKPLLYPSIMTKAVCWRLVKGLYSLAFLNSLVHTSGLLKLSFCSSNVVNHFFCDNSPLFQISSSSTTLNELLVFIFGSLFAMSSIITILISYVFIILTVVRIRSKDGKYKAFSTCTSHLMAVSLFHGTVIFMYLRPVKLFSLDTDKIASLFYTVVIPMLNPLIYSWRNKEVKDALRRVIATNVWIH.

At 1 to 26 (MASGNCTTPTTFILSGLTDNPGLQMP) the chain is on the extracellular side. N-linked (GlcNAc...) asparagine glycosylation is present at Asn-5. Residues 27 to 49 (LFMVFLAIYTITLLTNLGLIALI) traverse the membrane as a helical segment. Residues 50 to 57 (SVDLHLQT) are Cytoplasmic-facing. The chain crosses the membrane as a helical span at residues 58-79 (PMYIFLQNLSFTDAAYSTVITP). The Extracellular segment spans residues 80-100 (KMLATFLEERKTISYIGCILQ). Cys-97 and Cys-179 form a disulfide bridge. The chain crosses the membrane as a helical span at residues 101–120 (YFSFVLLTVTESLLLAVMAY). The Cytoplasmic segment spans residues 121-139 (DRYVAICKPLLYPSIMTKA). A helical transmembrane segment spans residues 140-164 (VCWRLVKGLYSLAFLNSLVHTSGLL). Residues 165–205 (KLSFCSSNVVNHFFCDNSPLFQISSSSTTLNELLVFIFGSL) lie on the Extracellular side of the membrane. Residues 206–226 (FAMSSIITILISYVFIILTVV) form a helical membrane-spanning segment. The Cytoplasmic portion of the chain corresponds to 227-239 (RIRSKDGKYKAFS). The chain crosses the membrane as a helical span at residues 240–260 (TCTSHLMAVSLFHGTVIFMYL). The Extracellular segment spans residues 261–271 (RPVKLFSLDTD). The chain crosses the membrane as a helical span at residues 272 to 292 (KIASLFYTVVIPMLNPLIYSW). Residues 293–312 (RNKEVKDALRRVIATNVWIH) lie on the Cytoplasmic side of the membrane.

Belongs to the G-protein coupled receptor 1 family.

It is found in the cell membrane. Odorant receptor. In Gallus gallus (Chicken), this protein is Olfactory receptor-like protein COR4 (COR4).